The sequence spans 413 residues: Serine/threonine transporter SstT (413 aa).

A run of 10 helical transmembrane segments spans residues 18–38 (LSLV…ALFA), 52–72 (FVSA…MASI), 86–106 (ILFL…IASM), 119–139 (IAVS…LSVV), 145–165 (ALMN…GVAI), 196–216 (LGIF…ALIG), 221–241 (LAVL…LIVF), 292–312 (VSIP…ITVL), 320–340 (LGIA…AICA), and 360–380 (LFGI…IIGV).

It belongs to the dicarboxylate/amino acid:cation symporter (DAACS) (TC 2.A.23) family.

The protein resides in the cell inner membrane. The catalysed reaction is L-serine(in) + Na(+)(in) = L-serine(out) + Na(+)(out). It catalyses the reaction L-threonine(in) + Na(+)(in) = L-threonine(out) + Na(+)(out). In terms of biological role, involved in the import of serine and threonine into the cell, with the concomitant import of sodium (symport system). The chain is Serine/threonine transporter SstT from Pseudomonas fluorescens (strain Pf0-1).